We begin with the raw amino-acid sequence, 129 residues long: M-zodatoxin-Lt8a (129 aa).

The N-terminal stretch at 1–20 is a signal peptide; that stretch reads MKYFVVALALVAAFACIAES. The propeptide occupies 21 to 60; it reads KPAESEHELAEVEEENELADLEDAVWLEHLADLSDLEEAR. The Processing quadruplet motif signature appears at 57–60; the sequence is EEAR.

This sequence belongs to the cationic peptide 06 (cytoinsectotoxin) family. In terms of processing, cleavage of the propeptide depends on the processing quadruplet motif (XXXR, with at least one of X being E). Expressed by the venom gland.

Its subcellular location is the secreted. Its function is as follows. Insecticidal, cytolytic and antimicrobial peptide. Has insecticidal activity against the flesh fly S.carnaria, and against the cockroach N.cinerea. Has insecticidal activity against D.melanogaster. Has hemolytic activity against human erythrocytes (EC(50)=6 uM). Has cytolytic activity against insect Sf9 cells (EC(50)=1 uM) and human leukocytes (EC(50)=3 uM). Has antibacterial activity against the Gram-positive bacteria A.globiformis VKM Ac-1112 (MIC=0.5 uM), and B.subtilis VKM B-501 (MIC=0.6-0.9 uM), and against the Gram-negative bacteria E.coli C600 (MIC=0.5 uM), E.coli DH5alpha (MIC=0.9 uM), E.coli MH1 (MIC=0.5 uM), P.aeruginosa PAO1 (MIC=1.9 uM), and P.fluorescens VKM B-894 (MIC=3.8 uM). Lacks antimicrobial activity against the Gram-positive bacteria M.luteus and S.aureus, and against the Gram-negative bacterium S.marcescens. Forms voltage-dependent, ion-permeable channels in membranes. At high concentration causes cell membrane lysis. The protein is M-zodatoxin-Lt8a (cit 1-1) of Lachesana tarabaevi (Spider).